The sequence spans 500 residues: Cytochrome P450 CYP736A12 (500 aa).

The helical transmembrane segment at 4–24 (LAYPLLFVLLGALSWWILPII) threads the bilayer. C442 contributes to the heme binding site.

Belongs to the cytochrome P450 family. Heme is required as a cofactor.

The protein localises to the membrane. In terms of biological role, probable heme-thiolate monooxygenase. The chain is Cytochrome P450 CYP736A12 from Panax ginseng (Korean ginseng).